A 40-amino-acid chain; its full sequence is Photosystem II reaction center protein J (40 aa).

Residues 8–28 (IPLWVVATIAGLGVITVVGIF) traverse the membrane as a helical segment.

It belongs to the PsbJ family. In terms of assembly, PSII is composed of 1 copy each of membrane proteins PsbA, PsbB, PsbC, PsbD, PsbE, PsbF, PsbH, PsbI, PsbJ, PsbK, PsbL, PsbM, PsbT, PsbX, PsbY, PsbZ, Psb30/Ycf12, peripheral proteins PsbO, CyanoQ (PsbQ), PsbU, PsbV and a large number of cofactors. It forms dimeric complexes.

The protein resides in the cellular thylakoid membrane. One of the components of the core complex of photosystem II (PSII). PSII is a light-driven water:plastoquinone oxidoreductase that uses light energy to abstract electrons from H(2)O, generating O(2) and a proton gradient subsequently used for ATP formation. It consists of a core antenna complex that captures photons, and an electron transfer chain that converts photonic excitation into a charge separation. The chain is Photosystem II reaction center protein J from Nostoc sp. (strain PCC 7120 / SAG 25.82 / UTEX 2576).